The following is a 108-amino-acid chain: Nucleoid-associated protein Lcho_1975 (108 aa).

This sequence belongs to the YbaB/EbfC family. As to quaternary structure, homodimer.

It localises to the cytoplasm. The protein resides in the nucleoid. Binds to DNA and alters its conformation. May be involved in regulation of gene expression, nucleoid organization and DNA protection. The sequence is that of Nucleoid-associated protein Lcho_1975 from Leptothrix cholodnii (strain ATCC 51168 / LMG 8142 / SP-6) (Leptothrix discophora (strain SP-6)).